Reading from the N-terminus, the 129-residue chain is Small ribosomal subunit protein uS8my (129 aa).

Belongs to the universal ribosomal protein uS8 family. As to quaternary structure, component of the mitochondrial ribosome small subunit.

Its subcellular location is the mitochondrion. The protein is Small ribosomal subunit protein uS8my (RPS15AE) of Arabidopsis thaliana (Mouse-ear cress).